A 249-amino-acid chain; its full sequence is Diaminopimelate epimerase (249 aa).

Residues asparagine 11 and asparagine 60 each coordinate substrate. The Proton donor role is filled by cysteine 69. Substrate contacts are provided by residues 70-71 (GN), asparagine 164, and 182-183 (ER). The active-site Proton acceptor is cysteine 192. A substrate-binding site is contributed by 193 to 194 (GT).

This sequence belongs to the diaminopimelate epimerase family. As to quaternary structure, homodimer.

The protein resides in the cytoplasm. It carries out the reaction (2S,6S)-2,6-diaminopimelate = meso-2,6-diaminopimelate. It functions in the pathway amino-acid biosynthesis; L-lysine biosynthesis via DAP pathway; DL-2,6-diaminopimelate from LL-2,6-diaminopimelate: step 1/1. Functionally, catalyzes the stereoinversion of LL-2,6-diaminopimelate (L,L-DAP) to meso-diaminopimelate (meso-DAP), a precursor of L-lysine and an essential component of the bacterial peptidoglycan. The protein is Diaminopimelate epimerase of Campylobacter jejuni subsp. jejuni serotype O:2 (strain ATCC 700819 / NCTC 11168).